The sequence spans 371 residues: Cathepsin W (371 aa).

The signal sequence occupies residues methionine 1–serine 21. Residues aspartate 22–serine 125 constitute a propeptide that is removed on maturation. Asparagine 48 and asparagine 112 each carry an N-linked (GlcNAc...) asparagine glycan. Cystine bridges form between cysteine 148-cysteine 189, cysteine 182-cysteine 224, and cysteine 282-cysteine 347. Cysteine 151 is an active-site residue. Residue asparagine 203 is glycosylated (N-linked (GlcNAc...) asparagine). Catalysis depends on residues histidine 289 and asparagine 326. Residue asparagine 344 is glycosylated (N-linked (GlcNAc...) asparagine).

Belongs to the peptidase C1 family.

It localises to the endoplasmic reticulum. Functionally, may have a specific function in the mechanism or regulation of T-cell cytolytic activity. In Mus musculus (Mouse), this protein is Cathepsin W (Ctsw).